A 451-amino-acid polypeptide reads, in one-letter code: Tubulin gamma-1 chain (451 aa).

The residue at position 131 (Ser131) is a Phosphoserine; by BRSK1. 142 to 148 (AGGTGSG) provides a ligand contact to GTP.

Belongs to the tubulin family. As to quaternary structure, component of the gamma-tubulin ring complex (gTuRC) consisting of TUBGCP2, TUBGCP3, TUBGCP4, TUBGCP5 and TUBGCP6 and gamma-tubulin TUBG1 or TUBG2. TUBGCP2, TUBGCP3, TUBGCP4, TUBGCP5 and TUBGCP6 assemble in a 5:5:2:1:1 stoichiometry; each is associated with a gamma-tubulin, thereby arranging 14 gamma-tubulins in a helical manner. Gamma-tubulin at the first position is blocked by TUBGCP3 at the last position, allowing 13 protafilaments to grow into a microtubule. The gTuRC (via TUBGCP3 and TUBGCP6) interacts with ACTB and MZT1; the interactions form a luminal bridge that stabilizes the initial structure during complex assembly. The gTuRC (via TUBGCP2) interacts with MZT2A/MZT2B and CDK5RAP2 (via CM1 motif); the interactions play a role in gTuRC activation. Interacts with alpha-beta tubulin heterodimers; the interaction allows microtubules to nucleate from the gTuRC. Interacts with B9D2. Interacts with CDK5RAP2; the interaction is leading to centrosomal localization of TUBG1 and CDK5RAP2. Interacts with CIMAP3. Interacts with SAS6 and NUP62 at the centrosome. Interacts with EML3 (phosphorylated at 'Thr-881') and HAUS8. Interacts with DNM2; this interaction may participate in centrosome cohesion. Interacts with CCDC66. In terms of processing, phosphorylation at Ser-131 by BRSK1 regulates centrosome duplication, possibly by mediating relocation of gamma-tubulin and its associated proteins from the cytoplasm to the centrosome.

The protein localises to the cytoplasm. Its subcellular location is the cytoskeleton. The protein resides in the microtubule organizing center. It localises to the centrosome. It is found in the spindle. Functionally, tubulin is the major constituent of microtubules, protein filaments consisting of alpha- and beta-tubulin heterodimers. Gamma-tubulin is a key component of the gamma-tubulin ring complex (gTuRC) which mediates microtubule nucleation. The gTuRC regulates the minus-end nucleation of alpha-beta tubulin heterodimers that grow into microtubule protafilaments, a critical step in centrosome duplication and spindle formation. In Bos taurus (Bovine), this protein is Tubulin gamma-1 chain.